The sequence spans 346 residues: Tryptophan--tRNA ligase (346 aa).

ATP-binding positions include 10–12 and 18–19; these read QAS and GN. The 'HIGH' region signature appears at 11–19; it reads ASGKQHLGN. Residue Asp-140 coordinates L-tryptophan. ATP contacts are provided by residues 152–154, Ile-191, and 200–204; these read GND and KMSKS. A 'KMSKS' region motif is present at residues 200–204; sequence KMSKS.

This sequence belongs to the class-I aminoacyl-tRNA synthetase family. Homodimer.

The protein resides in the cytoplasm. It carries out the reaction tRNA(Trp) + L-tryptophan + ATP = L-tryptophyl-tRNA(Trp) + AMP + diphosphate + H(+). Catalyzes the attachment of tryptophan to tRNA(Trp). This chain is Tryptophan--tRNA ligase, found in Mycoplasma pneumoniae (strain ATCC 29342 / M129 / Subtype 1) (Mycoplasmoides pneumoniae).